Here is an 813-residue protein sequence, read N- to C-terminus: Raf homolog serine/threonine-protein kinase (813 aa).

A disordered region spans residues 1–79 (MSRINFKKSS…GGAGTSDKEP (79 aa)). Over residues 9–23 (SSASTTPTSPHCPSP) the composition is skewed to low complexity. Positions 85–161 (KMIMVHLPFD…PGNELWVHSE (77 aa)) constitute an RBD domain. The Phorbol-ester/DAG-type zinc finger occupies 170–217 (KHAIVRRTFIPPKSCDVCNNPIWMMGFRCEFCQFKFHQRCSSFAPLYC). Residues Cys-184, Cys-187, Cys-198, Cys-201, His-206, Cys-209, and Cys-217 each contribute to the Zn(2+) site. 2 stretches are compositionally biased toward polar residues: residues 258–273 (TSGQ…SHPD) and 291–301 (SPQNETSQLSP). Disordered regions lie at residues 258 to 315 (TSGQ…SAPN), 338 to 358 (QRLE…QARH), and 383 to 472 (TPLG…PHHE). Positions 338-348 (QRLEEESRDKT) are enriched in basic and acidic residues. Residues 386–399 (GSNSPSSTCSSPPG) are compositionally biased toward low complexity. Residues 406–421 (TLGQSPNVSGSTTSSL) are compositionally biased toward polar residues. Basic and acidic residues predominate over residues 453 to 462 (SPGERLDAQR). Positions 481–748 (FIIQYKVGSG…VLERLRDIIL (268 aa)) constitute a Protein kinase domain. ATP contacts are provided by residues 487–495 (VGSGSFGTV) and Lys-507. Asp-602 serves as the catalytic Proton acceptor.

It belongs to the protein kinase superfamily. TKL Ser/Thr protein kinase family. RAF subfamily. Interacts with cdf-1 in a zinc-dependent manner which promotes its activity. The cofactor is Zn(2+).

The catalysed reaction is L-seryl-[protein] + ATP = O-phospho-L-seryl-[protein] + ADP + H(+). The enzyme catalyses L-threonyl-[protein] + ATP = O-phospho-L-threonyl-[protein] + ADP + H(+). Its function is as follows. Protein kinase that participates in the induction of vulva and has roles in fertility and viability. Acts downstream of the Ras protein let-60. Required for progression of developing oocytes through the pachytene stage. Plays a role in responses to M.nematophilum-mediated bacterial infection by promoting tail swelling and preventing constipation. Positively regulates lifespan upstream of mek-2 and mpk-1. The sequence is that of Raf homolog serine/threonine-protein kinase (lin-45) from Caenorhabditis elegans.